A 331-amino-acid chain; its full sequence is D-lactate dehydrogenase (331 aa).

Residues 156–157, aspartate 176, 206–207, 233–235, and aspartate 259 each bind NAD(+); these read RI, MP, and TAR. Arginine 235 is a catalytic residue. Glutamate 264 is a catalytic residue. Residue histidine 296 is the Proton donor of the active site.

It belongs to the D-isomer specific 2-hydroxyacid dehydrogenase family.

It carries out the reaction (R)-lactate + NAD(+) = pyruvate + NADH + H(+). In Treponema pallidum (strain Nichols), this protein is D-lactate dehydrogenase (ldhD).